The following is a 272-amino-acid chain: 1,4-dihydroxy-6-naphtoate synthase (272 aa).

Substrate-binding positions include 55-57 (KLS) and 107-108 (TA). Residue histidine 145 is the Proton acceptor of the active site.

It belongs to the MqnA/MqnD family. MqnD subfamily.

It carries out the reaction cyclic dehypoxanthinylfutalosinate = 1,4-dihydroxy-6-naphthoate + dihydroxyacetone. Its pathway is quinol/quinone metabolism; menaquinone biosynthesis. In terms of biological role, catalyzes the conversion of cyclic dehypoxanthine futalosine (cyclic DHFL) into 1,4-dihydroxy-6-naphthoate, a step in the biosynthesis of menaquinone (MK, vitamin K2). This is 1,4-dihydroxy-6-naphtoate synthase from Thermus thermophilus (strain ATCC 27634 / DSM 579 / HB8).